The chain runs to 316 residues: Low affinity immunoglobulin gamma Fc region receptor II-a (316 aa).

Residues 1–35 form the signal peptide; the sequence is MAMETQMSQNVCPRNLWLLQPLTVLLLLASADSQA. Residues 36 to 216 are Extracellular-facing; it reads APPKAVLKLE…PSVGSSSPVG (181 aa). Ig-like C2-type domains are found at residues 38-117 and 121-203; these read PKAV…VHLT and EWLV…VTIT. 2 disulfide bridges follow: Cys61-Cys103 and Cys142-Cys186. Residues Asn96, Asn170, and Asn177 are each glycosylated (N-linked (GlcNAc...) asparagine). A helical membrane pass occupies residues 217–239; sequence IIVAVVIATAVAAIVAAVVALIY. Residues 240–316 lie on the Cytoplasmic side of the membrane; sequence CRKKRISANS…PPNDHVNSNN (77 aa). Phosphotyrosine; by SRC-type Tyr-kinases occurs at positions 287 and 303.

In terms of assembly, interacts with INPP5D/SHIP1 and INPPL1/SHIP2, regulating its function. Interacts with APCS and FGR. Interacts with HCK. Post-translationally, phosphorylated by SRC-type Tyr-kinases such as HCK, LYN, BLK, FYN and SYK.

Its subcellular location is the cell membrane. In terms of biological role, binds to the Fc region of immunoglobulins gamma. Low affinity receptor. By binding to IgG it initiates cellular responses against pathogens and soluble antigens. Promotes phagocytosis of opsonized antigens. This chain is Low affinity immunoglobulin gamma Fc region receptor II-a (FCGR2A), found in Pan troglodytes (Chimpanzee).